The following is a 158-amino-acid chain: U4/U6.U5 small nuclear ribonucleoprotein 27 kDa protein (158 aa).

The interval 1 to 102 is disordered; it reads MGRSRSRSPE…AEDLEGKTEE (102 aa). Positions 13 to 59 are enriched in basic residues; sequence RERRRSRSASRERERRRRERSRSRERRRSRSRSPHRRRSRSPRRHRS. Positions 66–101 are enriched in basic and acidic residues; the sequence is RLKDRRDDDKKEPKESKGGGSKERQLAAEDLEGKTE.

The protein belongs to the SNUT3 family. Part of a tri-snRNP complex.

The protein localises to the nucleus. In terms of biological role, may play a role in mRNA splicing. The protein is U4/U6.U5 small nuclear ribonucleoprotein 27 kDa protein (snrnp27) of Xenopus laevis (African clawed frog).